The following is a 406-amino-acid chain: Eukaryotic initiation factor 4A-I (406 aa).

A disordered region spans residues 1–21 (MSASQDSRSRDNGPDGMEPEG). At Ser2 the chain carries N-acetylserine. At Ser4 the chain carries Phosphoserine. Positions 32–60 (DSFDDMNLSESLLRGIYAYGFEKPSAIQQ) match the Q motif motif. One can recognise a Helicase ATP-binding domain in the interval 63–234 (ILPCIKGYDV…KKFMRDPIRI (172 aa)). 76–83 (AQSGTGKT) is an ATP binding site. Lys118 carries the N6-acetyllysine modification. Lys146 participates in a covalent cross-link: Glycyl lysine isopeptide (Lys-Gly) (interchain with G-Cter in SUMO2). Thr158 carries the post-translational modification Phosphothreonine. Lys174 is modified (N6-acetyllysine). Residues 182 to 185 (DEAD) carry the DEAD box motif. Lys193 carries the N6-acetyllysine modification. Residue Lys225 forms a Glycyl lysine isopeptide (Lys-Gly) (interchain with G-Cter in SUMO2) linkage. N6-acetyllysine; alternate is present on Lys238. A Glycyl lysine isopeptide (Lys-Gly) (interchain with G-Cter in SUMO2); alternate cross-link involves residue Lys238. The region spanning 245-406 (GIRQFYINVE…EMPLNVADLI (162 aa)) is the Helicase C-terminal domain. Residues Lys309, Lys369, and Lys381 each participate in a glycyl lysine isopeptide (Lys-Gly) (interchain with G-Cter in SUMO2) cross-link.

Belongs to the DEAD box helicase family. eIF4A subfamily. As to quaternary structure, eIF4F is a multi-subunit complex, the composition of which varies with external and internal environmental conditions. It is composed of at least EIF4A, EIF4E and EIF4G1/EIF4G3. Interacts with PAIP1, EIF4E and UPF2. Found in a complex with XPO7, EIF4A1, ARHGAP1, VPS26A, VPS29, VPS35 and SFN. May interact with NOM1. Interacts with PDCD4; this interferes with the interaction between EIF4A and EIF4G. Interacts with RBM4. Interacts with DDX3X in an RNA-independent manner. Interacts with PKP1 (via N-terminus); the interaction promotes EIF4A1 recruitment to the cap-dependent translation complex and EIF4A1 ATPase activity.

The protein localises to the cytoplasm. It is found in the perinuclear region. Its subcellular location is the cell membrane. It localises to the stress granule. The enzyme catalyses ATP + H2O = ADP + phosphate + H(+). In terms of biological role, ATP-dependent RNA helicase which is a subunit of the eIF4F complex involved in cap recognition and is required for mRNA binding to ribosome. In the current model of translation initiation, eIF4A unwinds RNA secondary structures in the 5'-UTR of mRNAs which is necessary to allow efficient binding of the small ribosomal subunit, and subsequent scanning for the initiator codon. As a result, promotes cell proliferation and growth. In Macaca fascicularis (Crab-eating macaque), this protein is Eukaryotic initiation factor 4A-I (EIF4A1).